The following is a 147-amino-acid chain: Large ribosomal subunit protein uL15 (147 aa).

Over residues M1–R13 the composition is skewed to basic and acidic residues. The tract at residues M1 to L57 is disordered. Composition is skewed to gly residues over residues T23–Q35 and S42–G52.

Belongs to the universal ribosomal protein uL15 family. Part of the 50S ribosomal subunit.

In terms of biological role, binds to the 23S rRNA. This Lactococcus lactis subsp. cremoris (strain MG1363) protein is Large ribosomal subunit protein uL15.